A 115-amino-acid chain; its full sequence is T cell receptor beta variable 7-8 (115 aa).

The N-terminal stretch at 1–21 is a signal peptide; the sequence is MGTRLLCWVVLGFLGTDHTGA. Residues 22–115 enclose the Ig-like domain; sequence GVSQSPRYKV…SAVYLCASSL (94 aa). An intrachain disulfide couples C42 to C111.

Alpha-beta TR is a heterodimer composed of an alpha and beta chain; disulfide-linked. The alpha-beta TR is associated with the transmembrane signaling CD3 coreceptor proteins to form the TR-CD3 (TcR or TCR). The assembly of alpha-beta TR heterodimers with CD3 occurs in the endoplasmic reticulum where a single alpha-beta TR heterodimer associates with one CD3D-CD3E heterodimer, one CD3G-CD3E heterodimer and one CD247 homodimer forming a stable octameric structure. CD3D-CD3E and CD3G-CD3E heterodimers preferentially associate with TR alpha and TR beta chains, respectively. The association of the CD247 homodimer is the last step of TcR assembly in the endoplasmic reticulum and is required for transport to the cell surface.

It localises to the cell membrane. V region of the variable domain of T cell receptor (TR) beta chain that participates in the antigen recognition. Alpha-beta T cell receptors are antigen specific receptors which are essential to the immune response and are present on the cell surface of T lymphocytes. Recognize peptide-major histocompatibility (MH) (pMH) complexes that are displayed by antigen presenting cells (APC), a prerequisite for efficient T cell adaptive immunity against pathogens. Binding of alpha-beta TR to pMH complex initiates TR-CD3 clustering on the cell surface and intracellular activation of LCK that phosphorylates the ITAM motifs of CD3G, CD3D, CD3E and CD247 enabling the recruitment of ZAP70. In turn ZAP70 phosphorylates LAT, which recruits numerous signaling molecules to form the LAT signalosome. The LAT signalosome propagates signal branching to three major signaling pathways, the calcium, the mitogen-activated protein kinase (MAPK) kinase and the nuclear factor NF-kappa-B (NF-kB) pathways, leading to the mobilization of transcription factors that are critical for gene expression and essential for T cell growth and differentiation. The T cell repertoire is generated in the thymus, by V-(D)-J rearrangement. This repertoire is then shaped by intrathymic selection events to generate a peripheral T cell pool of self-MH restricted, non-autoaggressive T cells. Post-thymic interaction of alpha-beta TR with the pMH complexes shapes TR structural and functional avidity. The chain is T cell receptor beta variable 7-8 from Homo sapiens (Human).